A 1939-amino-acid polypeptide reads, in one-letter code: Myosin-8 (1939 aa).

The region spanning 35 to 84 (DAKTSVFVAEPKASYVKSTIQSKEGGKVTVKTEGGATLTVREDQVFPMNP) is the Myosin N-terminal SH3-like domain. Thr66 and Thr71 each carry phosphothreonine. The Myosin motor domain occupies 88–783 (DKIEDMAMMT…LLGLLEEMRD (696 aa)). Lys132 is subject to N6,N6,N6-trimethyllysine. 181–188 (GESGAGKT) contributes to the ATP binding site. Tyr391 carries the phosphotyrosine modification. Thr421 is modified (phosphothreonine). Residue Tyr426 is modified to Phosphotyrosine. A Phosphoserine modification is found at Ser627. An actin-binding region spans residues 660–682 (LNKLMTNLRSTHPHFVRCIIPNE). The residue at position 758 (His758) is a Pros-methylhistidine. Residues 762–776 (KFGHTKVFFKAGLLG) are actin-binding. The region spanning 783–815 (DEKLSQIITRTQAVCRGFLMRVEYQKMLQRREA) is the IQ domain. Positions 844 to 1939 (LLKSAETEKE…REVHTKISAE (1096 aa)) form a coiled coil. 4 positions are modified to phosphoserine: Ser1093, Ser1097, Ser1163, and Ser1238. Thr1242 is subject to Phosphothreonine. A Phosphoserine modification is found at Ser1244. Thr1256 carries the post-translational modification Phosphothreonine. Ser1262 is modified (phosphoserine). Phosphothreonine is present on residues Thr1266 and Thr1287. Residues Ser1293, Ser1304, and Ser1307 each carry the phosphoserine modification. At Tyr1465 the chain carries Phosphotyrosine. A Phosphothreonine modification is found at Thr1468. Ser1475 carries the phosphoserine modification. Tyr1493 is subject to Phosphotyrosine. Residue Ser1496 is modified to Phosphoserine. Thr1502 carries the post-translational modification Phosphothreonine. Ser1515 is subject to Phosphoserine. A Phosphothreonine modification is found at Thr1518. 6 positions are modified to phosphoserine: Ser1555, Ser1575, Ser1601, Ser1604, Ser1715, and Ser1727. Position 1731 is a phosphothreonine (Thr1731). Position 1740 is a phosphoserine (Ser1740).

Belongs to the TRAFAC class myosin-kinesin ATPase superfamily. Myosin family. Muscle myosin is a hexameric protein that consists of 2 heavy chain subunits (MHC), 2 alkali light chain subunits (MLC) and 2 regulatory light chain subunits (MLC-2).

The protein resides in the cytoplasm. It localises to the myofibril. In terms of biological role, muscle contraction. The protein is Myosin-8 (MYH8) of Canis lupus familiaris (Dog).